We begin with the raw amino-acid sequence, 191 residues long: Pyridoxal 5'-phosphate synthase subunit PdxT (191 aa).

An L-glutamine-binding site is contributed by 52–54 (GES). Residue Cys-81 is the Nucleophile of the active site. L-glutamine is bound by residues Arg-108 and 136–137 (IR). Residues His-172 and Glu-174 each act as charge relay system in the active site.

Belongs to the glutaminase PdxT/SNO family. As to quaternary structure, in the presence of PdxS, forms a dodecamer of heterodimers. Only shows activity in the heterodimer.

The enzyme catalyses aldehydo-D-ribose 5-phosphate + D-glyceraldehyde 3-phosphate + L-glutamine = pyridoxal 5'-phosphate + L-glutamate + phosphate + 3 H2O + H(+). The catalysed reaction is L-glutamine + H2O = L-glutamate + NH4(+). It functions in the pathway cofactor biosynthesis; pyridoxal 5'-phosphate biosynthesis. Functionally, catalyzes the hydrolysis of glutamine to glutamate and ammonia as part of the biosynthesis of pyridoxal 5'-phosphate. The resulting ammonia molecule is channeled to the active site of PdxS. This Actinobacillus pleuropneumoniae serotype 7 (strain AP76) protein is Pyridoxal 5'-phosphate synthase subunit PdxT.